Here is a 444-residue protein sequence, read N- to C-terminus: Trigger factor (444 aa).

The PPIase FKBP-type domain occupies 166-251 (GDQIVIDFKG…VKAVKAPKAA (86 aa)).

This sequence belongs to the FKBP-type PPIase family. Tig subfamily.

Its subcellular location is the cytoplasm. The enzyme catalyses [protein]-peptidylproline (omega=180) = [protein]-peptidylproline (omega=0). Involved in protein export. Acts as a chaperone by maintaining the newly synthesized protein in an open conformation. Functions as a peptidyl-prolyl cis-trans isomerase. This is Trigger factor from Paracoccus denitrificans (strain Pd 1222).